Reading from the N-terminus, the 247-residue chain is uncharacterized protein (247 aa).

Leu-11, Asn-85, and Lys-119 together coordinate NADP(+). Catalysis depends on Ser-136, which acts as the Proton donor. Positions 150, 154, 181, and 183 each coordinate NADP(+). Catalysis depends on Tyr-150, which acts as the Proton acceptor. Residue Lys-154 is the Lowers pKa of active site Tyr of the active site.

This sequence belongs to the short-chain dehydrogenases/reductases (SDR) family.

This is an uncharacterized protein from Schizosaccharomyces pombe (strain 972 / ATCC 24843) (Fission yeast).